Here is a 255-residue protein sequence, read N- to C-terminus: MLLVIDVGNTNTVFALHDGEQWVNQWRSATDSTKTADDHASWLWRLADMQGVDLSRVQGCVVSSVVPHAQFNFRNLARRYLNVEPLFIGEPGLKTGMAVRVRHPEQVGADRIVSALGAHVAYPGDLIVIDSGTATTFDIVSADGAFEGGIISPGIYLSMRALHDAAAQLPRIAIQKPPQVIGKDTVSAMQSGVFIGYIELIDGLVRRIKAEWGRPMTVIATGGVASLFEGASETIDYYDQDILIRGLLEVWKRNR.

Residue 6–13 (DVGNTNTV) coordinates ATP. 108–111 (GADR) is a substrate binding site. Aspartate 110 serves as the catalytic Proton acceptor. Aspartate 130 is a K(+) binding site. Threonine 133 contributes to the ATP binding site. Threonine 185 provides a ligand contact to substrate.

The protein belongs to the type III pantothenate kinase family. As to quaternary structure, homodimer. Requires NH4(+) as cofactor. The cofactor is K(+).

The protein resides in the cytoplasm. It carries out the reaction (R)-pantothenate + ATP = (R)-4'-phosphopantothenate + ADP + H(+). The protein operates within cofactor biosynthesis; coenzyme A biosynthesis; CoA from (R)-pantothenate: step 1/5. Its function is as follows. Catalyzes the phosphorylation of pantothenate (Pan), the first step in CoA biosynthesis. The protein is Type III pantothenate kinase of Hyphomonas neptunium (strain ATCC 15444).